Reading from the N-terminus, the 479-residue chain is Ribosomal RNA small subunit methyltransferase F (479 aa).

S-adenosyl-L-methionine is bound by residues 125 to 131, glutamate 149, aspartate 176, and aspartate 194; that span reads AAAPGSK. Cysteine 247 acts as the Nucleophile in catalysis.

Belongs to the class I-like SAM-binding methyltransferase superfamily. RsmB/NOP family.

Its subcellular location is the cytoplasm. It carries out the reaction cytidine(1407) in 16S rRNA + S-adenosyl-L-methionine = 5-methylcytidine(1407) in 16S rRNA + S-adenosyl-L-homocysteine + H(+). In terms of biological role, specifically methylates the cytosine at position 1407 (m5C1407) of 16S rRNA. The protein is Ribosomal RNA small subunit methyltransferase F of Escherichia coli O7:K1 (strain IAI39 / ExPEC).